A 343-amino-acid polypeptide reads, in one-letter code: Dimethyladenosine transferase 1, mitochondrial (343 aa).

Residues 28-31 (QNFL), asparagine 29, leucine 31, glycine 56, glutamate 78, aspartate 133, and asparagine 169 contribute to the S-adenosyl-L-methionine site.

The protein belongs to the class I-like SAM-binding methyltransferase superfamily. rRNA adenine N(6)-methyltransferase family. KsgA subfamily.

Its subcellular location is the mitochondrion. Probable S-adenosyl-L-methionine-dependent methyltransferase which specifically dimethylates mitochondrial 12S rRNA at the conserved stem loop. Also required for basal transcription of mitochondrial DNA. Stimulates transcription independently of the methyltransferase activity. This Vermamoeba vermiformis (Amoeba) protein is Dimethyladenosine transferase 1, mitochondrial.